The chain runs to 550 residues: Hydroxylamine reductase (550 aa).

4 residues coordinate [2Fe-2S] cluster: C3, C6, C18, and C25. Residues H249, E273, C317, C405, C433, C458, E492, and K494 each coordinate hybrid [4Fe-2O-2S] cluster. C405 bears the Cysteine persulfide mark.

Belongs to the HCP family. [2Fe-2S] cluster is required as a cofactor. The cofactor is hybrid [4Fe-2O-2S] cluster.

It is found in the cytoplasm. It catalyses the reaction A + NH4(+) + H2O = hydroxylamine + AH2 + H(+). Its function is as follows. Catalyzes the reduction of hydroxylamine to form NH(3) and H(2)O. This chain is Hydroxylamine reductase, found in Enterobacter sp. (strain 638).